Reading from the N-terminus, the 246-residue chain is MAVTMRQMLEAGVHFGHQTRFWNPKMAPFIFGHRNKIHIINLEKTLPMFTDAQKYVRQLAANRGTILFVGTKRQSRDTIAQEAQRAGMPYVNARWLGGMMTNFKTLKVSIKRLKDMEAAVEAGELEKMSKKEALLFEREIAKLQKSIGGVKDMGGIPDAIFVVDVGYHKIAVTEANKLGVPVIAVVDTNHSPEGVDYVIPGNDDSSKAVALYAEGVADAILEGRANAVNEVVQAARGDDEYVEENA.

It belongs to the universal ribosomal protein uS2 family.

The protein is Small ribosomal subunit protein uS2 of Burkholderia cenocepacia (strain ATCC BAA-245 / DSM 16553 / LMG 16656 / NCTC 13227 / J2315 / CF5610) (Burkholderia cepacia (strain J2315)).